Here is a 407-residue protein sequence, read N- to C-terminus: MIKVASITKVENGSIVTPKGFSAIGTAIGLKKEKKDLGAIVCDTPASCAAVYTTNQIQAAPLQVTKDSIATEGKLQAIIVNSGNANACTGMKGLQDAYEMRALGAEHFGLKENYVAVASTGVIGVPLPMDIIRNGIATLIPAKEEREAHSFSEAILTTDLITKETCYEMVIDGEKVLIAGVAKGSGMIHPNMATMLSFITTDAHIEHDVLQTTLSQITNHTFNQITIDGDTSTNDMVIVMASGLSETKPINMEHADWETFVFALQKVCEDLAKKIAQDGEGATKLIEVNVLGARTNEEAKKIAKQIVGSSLVKTAIHGEDPNWGRIISTIGQSEVAINPNTIDITLQSIAVLKNSEPQMFSEEEMKMRLQEHEIMIDVNLHLGEETGSAWGCDLSYEYVKINACYRT.

6 residues coordinate substrate: Thr157, Lys183, Thr194, Glu280, Asn402, and Thr407. Catalysis depends on Thr194, which acts as the Nucleophile.

The protein belongs to the ArgJ family. Heterotetramer of two alpha and two beta chains.

The protein resides in the cytoplasm. The enzyme catalyses N(2)-acetyl-L-ornithine + L-glutamate = N-acetyl-L-glutamate + L-ornithine. It carries out the reaction L-glutamate + acetyl-CoA = N-acetyl-L-glutamate + CoA + H(+). It functions in the pathway amino-acid biosynthesis; L-arginine biosynthesis; L-ornithine and N-acetyl-L-glutamate from L-glutamate and N(2)-acetyl-L-ornithine (cyclic): step 1/1. Its pathway is amino-acid biosynthesis; L-arginine biosynthesis; N(2)-acetyl-L-ornithine from L-glutamate: step 1/4. Its function is as follows. Catalyzes two activities which are involved in the cyclic version of arginine biosynthesis: the synthesis of N-acetylglutamate from glutamate and acetyl-CoA as the acetyl donor, and of ornithine by transacetylation between N(2)-acetylornithine and glutamate. In Bacillus cereus (strain ATCC 10987 / NRS 248), this protein is Arginine biosynthesis bifunctional protein ArgJ.